Consider the following 434-residue polypeptide: Ribulose bisphosphate carboxylase-like protein (434 aa).

Positions 198, 200, and 201 each coordinate Mg(2+). Lys-198 bears the N6-carboxylysine mark.

It belongs to the RuBisCO large chain family. Type IV subfamily. As to quaternary structure, homodimer. Requires Mg(2+) as cofactor.

May be involved in sulfur metabolism and oxidative stress response. Does not show RuBisCO activity. The chain is Ribulose bisphosphate carboxylase-like protein from Chlorobaculum thiosulfatiphilum (Chlorobium limicola f.sp. thiosulfatophilum).